We begin with the raw amino-acid sequence, 172 residues long: Translation initiation factor IF-3 (172 aa).

The protein belongs to the IF-3 family. In terms of assembly, monomer.

The protein resides in the cytoplasm. Its function is as follows. IF-3 binds to the 30S ribosomal subunit and shifts the equilibrium between 70S ribosomes and their 50S and 30S subunits in favor of the free subunits, thus enhancing the availability of 30S subunits on which protein synthesis initiation begins. This is Translation initiation factor IF-3 from Geobacter sulfurreducens (strain ATCC 51573 / DSM 12127 / PCA).